Consider the following 381-residue polypeptide: ELMO domain-containing protein 3 (381 aa).

Over residues 1–17 (MNENFHSFHEKELRDGQ) the composition is skewed to basic and acidic residues. The tract at residues 1-31 (MNENFHSFHEKELRDGQVESVSAGSSPPCDK) is disordered. In terms of domain architecture, ELMO spans 170–324 (MHGRVLQTIY…DLEMSAKKSP (155 aa)).

The protein resides in the cell projection. It is found in the stereocilium. Its subcellular location is the kinocilium. It localises to the cytoplasm. The protein localises to the cytoskeleton. Functionally, acts as a GTPase-activating protein (GAP) for ARL2 with low specific activity. This chain is ELMO domain-containing protein 3 (ELMOD3), found in Bos taurus (Bovine).